We begin with the raw amino-acid sequence, 533 residues long: CTP synthase (533 aa).

Residues 1-270 (MVHLAKYIVV…GDYIVRRIEL (270 aa)) are amidoligase domain. CTP is bound at residue Ser-16. Ser-16 lines the UTP pocket. 17–22 (SIGKGI) lines the ATP pocket. Position 57 (Tyr-57) interacts with L-glutamine. Asp-74 contacts ATP. The Mg(2+) site is built by Asp-74 and Glu-144. Residues 151–153 (DIE), 191–196 (KTKPTQ), and Lys-227 each bind CTP. UTP-binding positions include 191–196 (KTKPTQ) and Lys-227. Positions 303–533 (YVELEDSYIS…FLRAALERSR (231 aa)) constitute a Glutamine amidotransferase type-1 domain. Gly-355 lines the L-glutamine pocket. The active-site Nucleophile; for glutamine hydrolysis is Cys-382. Residues 383–386 (LGMQ), Glu-405, and Arg-462 each bind L-glutamine. Residues His-507 and Glu-509 contribute to the active site.

This sequence belongs to the CTP synthase family. As to quaternary structure, homotetramer.

It carries out the reaction UTP + L-glutamine + ATP + H2O = CTP + L-glutamate + ADP + phosphate + 2 H(+). The catalysed reaction is L-glutamine + H2O = L-glutamate + NH4(+). The enzyme catalyses UTP + NH4(+) + ATP = CTP + ADP + phosphate + 2 H(+). It participates in pyrimidine metabolism; CTP biosynthesis via de novo pathway; CTP from UDP: step 2/2. Its activity is regulated as follows. Allosterically activated by GTP, when glutamine is the substrate; GTP has no effect on the reaction when ammonia is the substrate. The allosteric effector GTP functions by stabilizing the protein conformation that binds the tetrahedral intermediate(s) formed during glutamine hydrolysis. Inhibited by the product CTP, via allosteric rather than competitive inhibition. Functionally, catalyzes the ATP-dependent amination of UTP to CTP with either L-glutamine or ammonia as the source of nitrogen. Regulates intracellular CTP levels through interactions with the four ribonucleotide triphosphates. The sequence is that of CTP synthase from Methanothermobacter thermautotrophicus (strain ATCC 29096 / DSM 1053 / JCM 10044 / NBRC 100330 / Delta H) (Methanobacterium thermoautotrophicum).